The sequence spans 569 residues: Protein Noxp20 (569 aa).

Disordered stretches follow at residues 1-87, 102-126, and 165-208; these read MSDD…GEVT, GDTG…QAGR, and ANSA…GSRG. The residue at position 197 (T197) is a Phosphothreonine. The residue at position 262 (S262) is a Phosphoserine. The interval 404-439 is disordered; sequence VSIDVAKGSEEEEKEEGKEEKAEEPEEDKTGGQGAK.

The protein belongs to the FAM114 family. In terms of tissue distribution, over-expressed in brain. Also detected in lung, stomach, and in a lower extent in testis and thymus.

The protein resides in the cytoplasm. May play a role in neuronal cell development. This Mus musculus (Mouse) protein is Protein Noxp20 (Fam114a1).